The sequence spans 158 residues: NADPH-dependent 7-cyano-7-deazaguanine reductase (158 aa).

Positions 1–13 (MAKRSNTTMTSAG) are enriched in polar residues. Residues 1-37 (MAKRSNTTMTSAGLQLGREVAPPDSPETAKLDRVPNP) form a disordered region. Positions 27-37 (ETAKLDRVPNP) are enriched in basic and acidic residues. The active-site Thioimide intermediate is Cys-56. The active-site Proton donor is the Asp-63. Residues 78–80 (VES) and 97–98 (HE) contribute to the substrate site.

This sequence belongs to the GTP cyclohydrolase I family. QueF type 1 subfamily.

The protein localises to the cytoplasm. It carries out the reaction 7-aminomethyl-7-carbaguanine + 2 NADP(+) = 7-cyano-7-deazaguanine + 2 NADPH + 3 H(+). It functions in the pathway tRNA modification; tRNA-queuosine biosynthesis. Its function is as follows. Catalyzes the NADPH-dependent reduction of 7-cyano-7-deazaguanine (preQ0) to 7-aminomethyl-7-deazaguanine (preQ1). In Bradyrhizobium sp. (strain ORS 278), this protein is NADPH-dependent 7-cyano-7-deazaguanine reductase.